A 334-amino-acid polypeptide reads, in one-letter code: BRISC and BRCA1-A complex member 1 (334 aa).

Met1 bears the N-acetylmethionine mark. The disordered stretch occupies residues 1–79 (MEVAEANSPT…VPGAVPKPWQ (79 aa)). Position 8 is a phosphoserine (Ser8). Positions 10-25 (TEEEEEEEEEEGEEPI) are enriched in acidic residues. 2 positions are modified to phosphoserine: Ser34 and Ser54. A compositionally biased stretch (low complexity) spans 59-68 (EAATADDGAA). The segment at 100-303 (VIICLDLSEE…LELHNCVAKL (204 aa)) is VWFA-like.

Belongs to the BABAM1 family. In terms of assembly, component of the ARISC complex, at least composed of UIMC1/RAP80, ABRAXAS1, BRCC3/BRCC36, BABAM2 and BABAM1/NBA1. Component of the BRCA1-A complex, at least composed of BRCA1, BARD1, UIMC1/RAP80, ABRAXAS1, BRCC3/BRCC36, BABAM2 and BABAM1/NBA1. In the BRCA1-A complex, interacts directly with ABRAXAS1 and BABAM2. Component of the BRISC complex, at least composed of ABRAXAS2, BRCC3/BRCC36, BABAM2 and BABAM1/NBA1. Identified in a complex with SHMT2 and the other subunits of the BRISC complex.

The protein resides in the cytoplasm. The protein localises to the nucleus. Component of the BRCA1-A complex, a complex that specifically recognizes 'Lys-63'-linked ubiquitinated histones H2A and H2AX at DNA lesions sites, leading to target the BRCA1-BARD1 heterodimer to sites of DNA damage at double-strand breaks (DSBs). The BRCA1-A complex also possesses deubiquitinase activity that specifically removes 'Lys-63'-linked ubiquitin on histones H2A and H2AX. In the BRCA1-A complex, it is required for the complex integrity and its localization at DSBs. Component of the BRISC complex, a multiprotein complex that specifically cleaves 'Lys-63'-linked ubiquitin in various substrates. In these 2 complexes, it is probably required to maintain the stability of BABAM2 and help the 'Lys-63'-linked deubiquitinase activity mediated by BRCC3/BRCC36 component. The BRISC complex is required for normal mitotic spindle assembly and microtubule attachment to kinetochores via its role in deubiquitinating NUMA1. Plays a role in interferon signaling via its role in the deubiquitination of the interferon receptor IFNAR1; deubiquitination increases IFNAR1 activity by enhancing its stability and cell surface expression. Down-regulates the response to bacterial lipopolysaccharide (LPS) via its role in IFNAR1 deubiquitination. In Rattus norvegicus (Rat), this protein is BRISC and BRCA1-A complex member 1 (Babam1).